A 346-amino-acid polypeptide reads, in one-letter code: Phosphoribosylformylglycinamidine cyclo-ligase (346 aa).

It belongs to the AIR synthase family.

It is found in the cytoplasm. The enzyme catalyses 2-formamido-N(1)-(5-O-phospho-beta-D-ribosyl)acetamidine + ATP = 5-amino-1-(5-phospho-beta-D-ribosyl)imidazole + ADP + phosphate + H(+). The protein operates within purine metabolism; IMP biosynthesis via de novo pathway; 5-amino-1-(5-phospho-D-ribosyl)imidazole from N(2)-formyl-N(1)-(5-phospho-D-ribosyl)glycinamide: step 2/2. This is Phosphoribosylformylglycinamidine cyclo-ligase from Bacillus cereus (strain ATCC 10987 / NRS 248).